Consider the following 287-residue polypeptide: ATP synthase gamma chain (287 aa).

This sequence belongs to the ATPase gamma chain family. F-type ATPases have 2 components, CF(1) - the catalytic core - and CF(0) - the membrane proton channel. CF(1) has five subunits: alpha(3), beta(3), gamma(1), delta(1), epsilon(1). CF(0) has three main subunits: a, b and c.

It is found in the cell membrane. Its function is as follows. Produces ATP from ADP in the presence of a proton gradient across the membrane. The gamma chain is believed to be important in regulating ATPase activity and the flow of protons through the CF(0) complex. The chain is ATP synthase gamma chain from Staphylococcus carnosus (strain TM300).